The sequence spans 371 residues: 4-hydroxy-3-methylbut-2-en-1-yl diphosphate synthase (flavodoxin) (371 aa).

[4Fe-4S] cluster-binding residues include Cys270, Cys273, Cys305, and Glu312.

The protein belongs to the IspG family. The cofactor is [4Fe-4S] cluster.

The catalysed reaction is (2E)-4-hydroxy-3-methylbut-2-enyl diphosphate + oxidized [flavodoxin] + H2O + 2 H(+) = 2-C-methyl-D-erythritol 2,4-cyclic diphosphate + reduced [flavodoxin]. The protein operates within isoprenoid biosynthesis; isopentenyl diphosphate biosynthesis via DXP pathway; isopentenyl diphosphate from 1-deoxy-D-xylulose 5-phosphate: step 5/6. Its function is as follows. Converts 2C-methyl-D-erythritol 2,4-cyclodiphosphate (ME-2,4cPP) into 1-hydroxy-2-methyl-2-(E)-butenyl 4-diphosphate. In Shewanella sp. (strain ANA-3), this protein is 4-hydroxy-3-methylbut-2-en-1-yl diphosphate synthase (flavodoxin).